The sequence spans 339 residues: Retinol dehydrogenase 10-A (339 aa).

The helical; Signal-anchor transmembrane segment at 3–23 (IFVEFFLVMLKVCWAIVMAGF) threads the bilayer. Position 40–64 (40–64 (VITGAGGGLGRLFAKEFARRRATLV)) interacts with NADP(+). S195 is a substrate binding site. Y208 (proton acceptor) is an active-site residue.

The protein belongs to the short-chain dehydrogenases/reductases (SDR) family.

Its subcellular location is the microsome membrane. The protein localises to the endoplasmic reticulum membrane. It carries out the reaction all-trans-retinol + NADP(+) = all-trans-retinal + NADPH + H(+). It participates in cofactor metabolism; retinol metabolism. Retinol dehydrogenase with a clear preference for NADP. Converts all-trans-retinol to all-trans-retinal. Has no detectable activity towards 11-cis-retinol, 9-cis-retinol and 13-cis-retinol. The protein is Retinol dehydrogenase 10-A (rdh10a) of Danio rerio (Zebrafish).